Consider the following 142-residue polypeptide: Baculoviral IAP repeat-containing protein 5 (142 aa).

One copy of the BIR repeat lies at 18 to 88 (RVSTFKNWPF…KHSSGCAFLS (71 aa)). Ser-20 carries the post-translational modification Phosphoserine; by AURKC. Lys-23 is modified (N6-acetyllysine). A Phosphothreonine; by CDK1 and CDK15 modification is found at Thr-34. Thr-48 is modified (phosphothreonine). The Zn(2+) site is built by Cys-57, Cys-60, His-77, and Cys-84. 4 positions are modified to N6-acetyllysine: Lys-90, Lys-110, Lys-112, and Lys-115. Thr-117 carries the post-translational modification Phosphothreonine; by AURKB. At Lys-129 the chain carries N6-acetyllysine.

This sequence belongs to the IAP family. In terms of assembly, monomer or homodimer. Exists as a homodimer in the apo state and as a monomer in the CPC-bound state. The monomer protects cells against apoptosis more efficiently than the dimer. Only the dimeric form is capable of enhancing tubulin stability in cells. When phosphorylated, interacts with LAMTOR5/HBXIP; the resulting complex binds pro-CASP9, as well as active CASP9, but much less efficiently. Component of the chromosomal passenger complex (CPC) composed of at least BIRC5/survivin, CDCA8/borealin, INCENP, AURKB or AURKC; in the complex forms a triple-helix bundle-based subcomplex with INCENP and CDCA8. Interacts with JTB. Interacts (via BIR domain) with histone H3 phosphorylated at 'Thr-3' (H3pT3). Interacts with EVI5. Interacts with GTP-bound RAN in both the S and M phases of the cell cycle. Interacts with USP9X. Interacts with tubulin. Interacts with BIRC2/c-IAP1. The acetylated form at Lys-129 interacts with STAT3. The monomeric form deacetylated at Lys-129 interacts with XPO1/CRM1. The monomeric form interacts with XIAP/BIRC4. Both the dimeric and monomeric form can interact with DIABLO/SMAC. Interacts with BIRC6/bruce. Interacts with FBXL7; this interaction facilitates the polyubiquitination and subsequent proteasomal degradation of BIRC5 by the SCF(FBXL7) E3 ubiquitin-protein ligase complex. Ubiquitinated by the Cul9-RING ubiquitin-protein ligase complex, leading to its degradation. Ubiquitination is required for centrosomal targeting. Deubiquitinated by USP35 or USP38; leading to stabilization. In terms of processing, acetylation at Lys-129 results in its homodimerization, while deacetylation promotes the formation of monomers which heterodimerize with XPO1/CRM1 which facilitates its nuclear export. The acetylated form represses STAT3 transactivation. The dynamic equilibrium between its acetylation and deacetylation at Lys-129 determines its interaction with XPO1/CRM1, its subsequent subcellular localization, and its ability to inhibit STAT3 transactivation. Post-translationally, in vitro phosphorylation at Thr-117 by AURKB prevents interaction with INCENP and localization to mitotic chromosomes. Phosphorylation at Thr-48 by CK2 is critical for its mitotic and anti-apoptotic activities. Phosphorylation at Thr-34 by CDK15 is critical for its anti-apoptotic activity. Phosphorylation at Ser-20 by AURKC is critical for regulation of proper chromosome alignment and segregation, and possibly cytokinesis.

The protein localises to the cytoplasm. It is found in the nucleus. The protein resides in the chromosome. Its subcellular location is the centromere. It localises to the cytoskeleton. The protein localises to the spindle. It is found in the kinetochore. The protein resides in the midbody. Multitasking protein that has dual roles in promoting cell proliferation and preventing apoptosis. Component of a chromosome passage protein complex (CPC) which is essential for chromosome alignment and segregation during mitosis and cytokinesis. Acts as an important regulator of the localization of this complex; directs CPC movement to different locations from the inner centromere during prometaphase to midbody during cytokinesis and participates in the organization of the center spindle by associating with polymerized microtubules. Involved in the recruitment of CPC to centromeres during early mitosis via association with histone H3 phosphorylated at 'Thr-3' (H3pT3) during mitosis. The complex with RAN plays a role in mitotic spindle formation by serving as a physical scaffold to help deliver the RAN effector molecule TPX2 to microtubules. May counteract a default induction of apoptosis in G2/M phase. The acetylated form represses STAT3 transactivation of target gene promoters. May play a role in neoplasia. Inhibitor of CASP3 and CASP7. Essential for the maintenance of mitochondrial integrity and function. The sequence is that of Baculoviral IAP repeat-containing protein 5 (BIRC5) from Bos taurus (Bovine).